Reading from the N-terminus, the 329-residue chain is Urease accessory protein UreD 2 (329 aa).

The tract at residues 100–120 (YSRPSDSSKFTNGTQSANSNT) is disordered. Residues 103-120 (PSDSSKFTNGTQSANSNT) are compositionally biased toward polar residues.

This sequence belongs to the UreD family. UreD, UreF and UreG form a complex that acts as a GTP-hydrolysis-dependent molecular chaperone, activating the urease apoprotein by helping to assemble the nickel containing metallocenter of UreC. The UreE protein probably delivers the nickel.

It is found in the cytoplasm. Functionally, required for maturation of urease via the functional incorporation of the urease nickel metallocenter. This is Urease accessory protein UreD 2 from Psychrobacter cryohalolentis (strain ATCC BAA-1226 / DSM 17306 / VKM B-2378 / K5).